A 513-amino-acid chain; its full sequence is Cytochrome P450 monooxygenase orf3 (513 aa).

Residues 11–31 (LVALGLIAATIIIYSFTLTVY) traverse the membrane as a helical segment. Residues Asn211 and Asn351 are each glycosylated (N-linked (GlcNAc...) asparagine). A heme-binding site is contributed by Cys455.

This sequence belongs to the cytochrome P450 family. Heme serves as cofactor.

Its subcellular location is the membrane. The protein operates within mycotoxin biosynthesis. Cytochrome P450 monooxygenase; part of the gene cluster that mediates the biosynthesis of brefeldin A (BFA), a protein transport inhibitor that shows antiviral, antifungal, and antitumor properties. The proposed biosynthesis of BFA involves formation of an acyclic polyketide chain that is differentially tailored throughout the backbone. The highly reducing polyketide synthase Bref-PKS is proposed to synthesize the precisely reduced octaketide precursor, which could then be directly offloaded by the thiohydrolase enzyme Bref-TH followed by a cytochrome P450 monooxygenase-mediated formation of the cyclopentane ring and macrocyclization to afford 7-deoxy BFA. Alternatively, the first ring annulation can also occur on the ACP-tethered intermediate before the thiohydrolase release and lactonization. The C7-hydroxylation by another cytochrome P450 monooxygenase is believed to be the final step in the process to obtain the final structure of BFA. In addition to the HRPKS Bref-PKS and the thiohydrolase Bref-TH, the brefeldin A biosynthesis cluster contains 4 cytochrome p450 monooxygenases (called orf3 to orf6), as well a the probable cluster-specific transcription regulator orf8. This is Cytochrome P450 monooxygenase orf3 from Eupenicillium brefeldianum (Penicillium brefeldianum).